A 471-amino-acid polypeptide reads, in one-letter code: 3-isopropylmalate dehydratase large subunit (471 aa).

[4Fe-4S] cluster-binding residues include cysteine 347, cysteine 407, and cysteine 410.

Belongs to the aconitase/IPM isomerase family. LeuC type 1 subfamily. As to quaternary structure, heterodimer of LeuC and LeuD. Requires [4Fe-4S] cluster as cofactor.

The catalysed reaction is (2R,3S)-3-isopropylmalate = (2S)-2-isopropylmalate. The protein operates within amino-acid biosynthesis; L-leucine biosynthesis; L-leucine from 3-methyl-2-oxobutanoate: step 2/4. Catalyzes the isomerization between 2-isopropylmalate and 3-isopropylmalate, via the formation of 2-isopropylmaleate. This Prochlorococcus marinus (strain MIT 9211) protein is 3-isopropylmalate dehydratase large subunit.